A 165-amino-acid chain; its full sequence is Large ribosomal subunit protein uL5 (165 aa).

The protein belongs to the universal ribosomal protein uL5 family. Part of the 50S ribosomal subunit; contacts the 5S rRNA and probably tRNA. Forms a bridge to the 30S subunit in the 70S ribosome.

This is one of the proteins that bind and probably mediate the attachment of the 5S RNA into the large ribosomal subunit, where it forms part of the central protuberance. In the 70S ribosome it contacts protein S13 of the 30S subunit (bridge B1b), connecting the 2 subunits; this bridge is implicated in subunit movement. May contact the P site tRNA; the 5S rRNA and some of its associated proteins might help stabilize positioning of ribosome-bound tRNAs. In Methanosarcina acetivorans (strain ATCC 35395 / DSM 2834 / JCM 12185 / C2A), this protein is Large ribosomal subunit protein uL5.